Reading from the N-terminus, the 204-residue chain is Factor arrest protein 3 (204 aa).

Component of a complex at least composed of FAR3, FAR7, FAR8, FAR10, FAR11 and VPS64.

It is found in the endoplasmic reticulum. Participates in the control of the reentry into the cell cycle following pheromone treatment. The polypeptide is Factor arrest protein 3 (FAR3) (Saccharomyces cerevisiae (strain ATCC 204508 / S288c) (Baker's yeast)).